The primary structure comprises 56 residues: Ribosome modulation factor (56 aa).

It belongs to the ribosome modulation factor family.

It is found in the cytoplasm. In terms of biological role, during stationary phase, converts 70S ribosomes to an inactive dimeric form (100S ribosomes). This is Ribosome modulation factor from Serratia proteamaculans (strain 568).